Reading from the N-terminus, the 310-residue chain is tRNA dimethylallyltransferase (310 aa).

14 to 21 (GPTASGKT) is an ATP binding site. Position 16–21 (16–21 (TASGKT)) interacts with substrate. 3 interaction with substrate tRNA regions span residues 39-42 (DSAL), 163-167 (QRLSR), and 244-249 (RCVGYR).

This sequence belongs to the IPP transferase family. In terms of assembly, monomer. Mg(2+) serves as cofactor.

The catalysed reaction is adenosine(37) in tRNA + dimethylallyl diphosphate = N(6)-dimethylallyladenosine(37) in tRNA + diphosphate. Functionally, catalyzes the transfer of a dimethylallyl group onto the adenine at position 37 in tRNAs that read codons beginning with uridine, leading to the formation of N6-(dimethylallyl)adenosine (i(6)A). This chain is tRNA dimethylallyltransferase, found in Aeromonas salmonicida (strain A449).